The following is a 399-amino-acid chain: Elongation factor Tu (399 aa).

The region spanning 10–207 (KTHMNVGTIG…AVDSYFPDPV (198 aa)) is the tr-type G domain. A G1 region spans residues 19–26 (GHIDHGKT). Residue 19–26 (GHIDHGKT) coordinates GTP. Residue Thr26 coordinates Mg(2+). The G2 stretch occupies residues 60-64 (GITIN). The G3 stretch occupies residues 81–84 (DCPG). GTP-binding positions include 81–85 (DCPGH) and 136–139 (NKVD). The G4 stretch occupies residues 136-139 (NKVD). The interval 174 to 176 (SAL) is G5.

The protein belongs to the TRAFAC class translation factor GTPase superfamily. Classic translation factor GTPase family. EF-Tu/EF-1A subfamily. Monomer.

It is found in the cytoplasm. It carries out the reaction GTP + H2O = GDP + phosphate + H(+). In terms of biological role, GTP hydrolase that promotes the GTP-dependent binding of aminoacyl-tRNA to the A-site of ribosomes during protein biosynthesis. The chain is Elongation factor Tu from Petrotoga mobilis (strain DSM 10674 / SJ95).